The chain runs to 558 residues: Receptor-like kinase LIP2 (558 aa).

The interval Met1–Glu45 is disordered. The span at Ser15 to Asn24 shows a compositional bias: low complexity. Basic and acidic residues predominate over residues Asn25–Glu36. A Phosphothreonine modification is found at Thr53. A Protein kinase domain is found at Phe64–Leu343. Residues Leu70 to Val78 and Lys93 contribute to the ATP site. Tyr138 carries the post-translational modification Phosphotyrosine. Residue Asp191 is the Proton acceptor of the active site. Residues Ser195 and Ser227 each carry the phosphoserine modification. Thr233 is subject to Phosphothreonine. Tyr241 carries the post-translational modification Phosphotyrosine. Residues His372–Glu558 form a disordered region. Over residues Glu401–Glu418 the composition is skewed to basic and acidic residues. Residues Glu419–Ser431 are compositionally biased toward acidic residues. Over residues Asn432–Asn448 the composition is skewed to basic and acidic residues. The segment covering Ser473 to Ser486 has biased composition (low complexity). Composition is skewed to basic and acidic residues over residues Tyr488–Glu500, Glu508–Asp524, and Ile547–Glu558.

This sequence belongs to the protein kinase superfamily. Ser/Thr protein kinase family. As to quaternary structure, interacts with PRK6. In terms of processing, palmitoylated. Expressed in mature pollen and in germinating pollen tubes.

The protein resides in the cell membrane. In terms of biological role, involved in pollen tube guidance into micropyle. Participates in perception of the ovule-secreted peptide signal LURE1. The chain is Receptor-like kinase LIP2 from Arabidopsis thaliana (Mouse-ear cress).